A 248-amino-acid chain; its full sequence is Phosphoribosylformylglycinamidine synthase subunit PurQ (248 aa).

Residues 6-248 (AMVLRMEGTN…IFFRILYNST (243 aa)) enclose the Glutamine amidotransferase type-1 domain. The active-site Nucleophile is cysteine 95. Residues histidine 215 and glutamate 217 contribute to the active site.

As to quaternary structure, part of the FGAM synthase complex composed of 1 PurL, 1 PurQ and 2 PurS subunits.

Its subcellular location is the cytoplasm. It catalyses the reaction N(2)-formyl-N(1)-(5-phospho-beta-D-ribosyl)glycinamide + L-glutamine + ATP + H2O = 2-formamido-N(1)-(5-O-phospho-beta-D-ribosyl)acetamidine + L-glutamate + ADP + phosphate + H(+). The enzyme catalyses L-glutamine + H2O = L-glutamate + NH4(+). The protein operates within purine metabolism; IMP biosynthesis via de novo pathway; 5-amino-1-(5-phospho-D-ribosyl)imidazole from N(2)-formyl-N(1)-(5-phospho-D-ribosyl)glycinamide: step 1/2. Its function is as follows. Part of the phosphoribosylformylglycinamidine synthase complex involved in the purines biosynthetic pathway. Catalyzes the ATP-dependent conversion of formylglycinamide ribonucleotide (FGAR) and glutamine to yield formylglycinamidine ribonucleotide (FGAM) and glutamate. The FGAM synthase complex is composed of three subunits. PurQ produces an ammonia molecule by converting glutamine to glutamate. PurL transfers the ammonia molecule to FGAR to form FGAM in an ATP-dependent manner. PurS interacts with PurQ and PurL and is thought to assist in the transfer of the ammonia molecule from PurQ to PurL. This chain is Phosphoribosylformylglycinamidine synthase subunit PurQ, found in Picrophilus torridus (strain ATCC 700027 / DSM 9790 / JCM 10055 / NBRC 100828 / KAW 2/3).